The sequence spans 145 residues: NADH-quinone oxidoreductase subunit A (145 aa).

The next 3 membrane-spanning stretches (helical) occupy residues 14-34 (FAVFLIVSIGLCCLMLAGAWF), 66-86 (FYLVAMFFVIFDVEALYLYAW), and 96-116 (VGFVEAAIFILVLLAGLFYLV).

The protein belongs to the complex I subunit 3 family. In terms of assembly, NDH-1 is composed of 13 different subunits. Subunits NuoA, H, J, K, L, M, N constitute the membrane sector of the complex.

It is found in the cell inner membrane. The enzyme catalyses a quinone + NADH + 5 H(+)(in) = a quinol + NAD(+) + 4 H(+)(out). Functionally, NDH-1 shuttles electrons from NADH, via FMN and iron-sulfur (Fe-S) centers, to quinones in the respiratory chain. The immediate electron acceptor for the enzyme in this species is believed to be ubiquinone. Couples the redox reaction to proton translocation (for every two electrons transferred, four hydrogen ions are translocated across the cytoplasmic membrane), and thus conserves the redox energy in a proton gradient. The sequence is that of NADH-quinone oxidoreductase subunit A from Erwinia tasmaniensis (strain DSM 17950 / CFBP 7177 / CIP 109463 / NCPPB 4357 / Et1/99).